Here is a 554-residue protein sequence, read N- to C-terminus: Hydroxylamine reductase (554 aa).

Residues Cys3, Cys6, Cys18, and Cys25 each contribute to the [2Fe-2S] cluster site. The hybrid [4Fe-2O-2S] cluster site is built by His252, Glu276, Cys320, Cys408, Cys436, Cys461, Glu495, and Lys497. The residue at position 408 (Cys408) is a Cysteine persulfide.

The protein belongs to the HCP family. Requires [2Fe-2S] cluster as cofactor. Hybrid [4Fe-2O-2S] cluster is required as a cofactor.

The protein resides in the cytoplasm. The enzyme catalyses A + NH4(+) + H2O = hydroxylamine + AH2 + H(+). Catalyzes the reduction of hydroxylamine to form NH(3) and H(2)O. This chain is Hydroxylamine reductase, found in Shewanella amazonensis (strain ATCC BAA-1098 / SB2B).